Reading from the N-terminus, the 115-residue chain is NADH-ubiquinone oxidoreductase chain 3 (115 aa).

3 helical membrane-spanning segments follow: residues 4 to 24 (LLVI…AFWL), 55 to 75 (FFLV…LLPI), and 84 to 104 (INMV…GLAY).

This sequence belongs to the complex I subunit 3 family. In terms of assembly, core subunit of respiratory chain NADH dehydrogenase (Complex I) which is composed of 45 different subunits. Interacts with TMEM186. Interacts with TMEM242.

The protein localises to the mitochondrion inner membrane. It carries out the reaction a ubiquinone + NADH + 5 H(+)(in) = a ubiquinol + NAD(+) + 4 H(+)(out). In terms of biological role, core subunit of the mitochondrial membrane respiratory chain NADH dehydrogenase (Complex I) which catalyzes electron transfer from NADH through the respiratory chain, using ubiquinone as an electron acceptor. Essential for the catalytic activity of complex I. This is NADH-ubiquinone oxidoreductase chain 3 from Ochrotomys nuttalli (Golden mouse).